A 427-amino-acid chain; its full sequence is Serine hydroxymethyltransferase (427 aa).

120 to 122 (GHI) serves as a coordination point for (6S)-5,6,7,8-tetrahydrofolate. Lysine 226 carries the post-translational modification N6-(pyridoxal phosphate)lysine.

It belongs to the SHMT family. In terms of assembly, homodimer. It depends on pyridoxal 5'-phosphate as a cofactor.

It is found in the cytoplasm. The protein operates within amino-acid biosynthesis; glycine biosynthesis; glycine from L-serine: step 1/1. In terms of biological role, catalyzes the reversible interconversion of serine and glycine with a modified folate serving as the one-carbon carrier. Also exhibits a pteridine-independent aldolase activity toward beta-hydroxyamino acids, producing glycine and aldehydes, via a retro-aldol mechanism. In Pyrococcus horikoshii (strain ATCC 700860 / DSM 12428 / JCM 9974 / NBRC 100139 / OT-3), this protein is Serine hydroxymethyltransferase.